A 160-amino-acid chain; its full sequence is Keratin-associated protein 13-4 (160 aa).

4 consecutive repeat copies span residues 41–50, 51–60, 61–70, and 77–86. Residues 41 to 86 are 4 X 10 AA approximate repeats; that stretch reads CQLRSSLYRDCQKTCWEPASCQKSCYRPRTSILCCPCQTTCSGSLG.

This sequence belongs to the PMG family. In terms of assembly, interacts with hair keratins.

In the hair cortex, hair keratin intermediate filaments are embedded in an interfilamentous matrix, consisting of hair keratin-associated proteins (KRTAP), which are essential for the formation of a rigid and resistant hair shaft through their extensive disulfide bond cross-linking with abundant cysteine residues of hair keratins. The matrix proteins include the high-sulfur and high-glycine-tyrosine keratins. This Homo sapiens (Human) protein is Keratin-associated protein 13-4 (KRTAP13-4).